The following is a 325-amino-acid chain: Beta-ketoacyl-[acyl-carrier-protein] synthase III (325 aa).

Active-site residues include C119 and H252. An ACP-binding region spans residues 253–257 (QANLR). N282 is a catalytic residue.

This sequence belongs to the thiolase-like superfamily. FabH family. As to quaternary structure, homodimer.

The protein resides in the cytoplasm. It carries out the reaction malonyl-[ACP] + acetyl-CoA + H(+) = 3-oxobutanoyl-[ACP] + CO2 + CoA. It functions in the pathway lipid metabolism; fatty acid biosynthesis. In terms of biological role, catalyzes the condensation reaction of fatty acid synthesis by the addition to an acyl acceptor of two carbons from malonyl-ACP. Catalyzes the first condensation reaction which initiates fatty acid synthesis and may therefore play a role in governing the total rate of fatty acid production. Possesses both acetoacetyl-ACP synthase and acetyl transacylase activities. Its substrate specificity determines the biosynthesis of branched-chain and/or straight-chain of fatty acids. The sequence is that of Beta-ketoacyl-[acyl-carrier-protein] synthase III from Polaromonas naphthalenivorans (strain CJ2).